The chain runs to 123 residues: DNA-directed RNA polymerase I subunit RPA12 (123 aa).

Cys-17, Cys-20, Cys-35, Cys-38, Cys-84, and Cys-87 together coordinate Zn(2+). The C4-type zinc finger occupies 17-38 (CPDCGSVLPLPGVQDAVACTRC). The TFIIS-type zinc finger occupies 80-120 (VDRRCSRCGHEGMAYHTRQMRSADEGQTVFYTCTNCKFQEK). The Hairpin motif lies at 103–104 (DE). Zn(2+) is bound by residues Cys-112 and Cys-115.

This sequence belongs to the archaeal RpoM/eukaryotic RPA12/RPB9/RPC11 RNA polymerase family. As to quaternary structure, component of the RNA polymerase I (Pol I) complex consisting of at least 13 subunits.

The protein resides in the nucleus. It is found in the nucleolus. Its function is as follows. Core component of RNA polymerase I (Pol I), a DNA-dependent RNA polymerase which synthesizes ribosomal RNA precursors using the four ribonucleoside triphosphates as substrates. Can mediate Pol I proofreading of the nascent RNA transcript. Anchors into the Pol I active site to monitor transcription fidelity and cleave mis-incorporated 5'-ribonucleotides. The sequence is that of DNA-directed RNA polymerase I subunit RPA12 from Bos taurus (Bovine).